A 121-amino-acid chain; its full sequence is UPF0738 protein BLi01253/BL05110 (121 aa).

Belongs to the UPF0738 family.

The sequence is that of UPF0738 protein BLi01253/BL05110 from Bacillus licheniformis (strain ATCC 14580 / DSM 13 / JCM 2505 / CCUG 7422 / NBRC 12200 / NCIMB 9375 / NCTC 10341 / NRRL NRS-1264 / Gibson 46).